The chain runs to 89 residues: UPF0297 protein OB2008 (89 aa).

This sequence belongs to the UPF0297 family.

This Oceanobacillus iheyensis (strain DSM 14371 / CIP 107618 / JCM 11309 / KCTC 3954 / HTE831) protein is UPF0297 protein OB2008.